The sequence spans 94 residues: Co-chaperonin GroES (94 aa).

It belongs to the GroES chaperonin family. As to quaternary structure, heptamer of 7 subunits arranged in a ring. Interacts with the chaperonin GroEL.

The protein localises to the cytoplasm. Functionally, together with the chaperonin GroEL, plays an essential role in assisting protein folding. The GroEL-GroES system forms a nano-cage that allows encapsulation of the non-native substrate proteins and provides a physical environment optimized to promote and accelerate protein folding. GroES binds to the apical surface of the GroEL ring, thereby capping the opening of the GroEL channel. This Clostridium novyi (strain NT) protein is Co-chaperonin GroES.